We begin with the raw amino-acid sequence, 152 residues long: Protein FERTILITY RESTORER RF2, mitochondrial (152 aa).

Residues 1–52 (MSTLVTCSLPGAVTTHASTRRFGGSQFQTSQASCISFKREVSAKAVLRSVRC) constitute a mitochondrion transit peptide. The segment covering 52 to 69 (CNATQTQSAQRKSSTATV) has biased composition (polar residues). The disordered stretch occupies residues 52–99 (CNATQTQSAQRKSSTATVKRSDPKGKIQGPKLDDGSGGFPPFRFGKGG).

The protein localises to the mitochondrion. Functionally, restores fertility in rice varieties with LD-type cytoplasmic male sterility (CMS). CMS is caused by genetic incompatibility between nuclei and mitochondria within male reproductive organs. Corresponds to the functional allele of RF2, which is dependent of the presence of Ile-78 in the japonica cultivars Fukuyama and Owarihatamochi (AC F1SZ42), and indica cultivar Kasalath (AC F1SZ41). Non-functional RF2 alleles are found in japonica cultivars Taichung 65 and Nipponbare (AC F1SZ44), where Ile-78 is replaced by Thr-78. The chain is Protein FERTILITY RESTORER RF2, mitochondrial from Oryza sativa subsp. japonica (Rice).